The primary structure comprises 1330 residues: Ubinuclein-2 (1330 aa).

The disordered stretch occupies residues 1–113; the sequence is MAEPRRVAFI…PPPRPPKETV (113 aa). Residue S13 is modified to Phosphoserine. Basic and acidic residues-rich tracts occupy residues 16–31 and 55–67; these read RRREADFAGAEREPPR and ARDKPLPQREVSR. Pro residues predominate over residues 81 to 96; that stretch reads PEPPPPPLPLQTPPPR. T229 is subject to Phosphothreonine. S236 is modified (phosphoserine). 2 disordered regions span residues 236–304 and 322–345; these read SDTE…KKRY and DALKKESTPKVPVIPSTSSLPKPP. Phosphothreonine is present on T238. Residue K258 forms a Glycyl lysine isopeptide (Lys-Gly) (interchain with G-Cter in SUMO2) linkage. Residue S297 is modified to Phosphoserine. 4 positions are modified to phosphoserine: S402, S405, S408, and S570. Disordered stretches follow at residues 559–583, 767–789, 801–835, 866–909, 964–991, 1021–1202, and 1292–1330; these read LQADEEREKNGSDDDDDEKPGKRVI, NKGPSVSSRLNVPTTKPRPGLRE, LATPKKLDSPQTAHSSSLIAGHTGPVPKKPQDLAH, GLQR…SLTQ, YRLPLSTPSPGNGSQGSHPLVSRTAPST, PKLA…SSVV, and PGTQHAATLPHSPLPTHLQQAFNDGGQSKGDTKLPRKPQ. Residues 560-570 are compositionally biased toward basic and acidic residues; it reads QADEEREKNGS. Polar residues-rich tracts occupy residues 767–780 and 809–818; these read NKGPSVSSRLNVPT and SPQTAHSSSL. Over residues 866–895 the composition is skewed to low complexity; sequence GLQRSSQIHASSSQTHVSSSQAQAAASSHA. 2 stretches are compositionally biased toward polar residues: residues 899 to 909 and 969 to 980; these read SEAQDASSLTQ and STPSPGNGSQGS. A compositionally biased stretch (pro residues) spans 1030–1044; the sequence is ATSPKPLTSPKPSVS. The span at 1045-1056 shows a compositional bias: low complexity; it reads PKPSLSAKPSVS. Residue K1052 is modified to N6-acetyllysine. Composition is skewed to polar residues over residues 1073–1148, 1158–1169, and 1308–1317; these read PSSS…NSLS, RGSNLNSSGANR, and HLQQAFNDGG. At S1107 the chain carries Phosphoserine. The residue at position 1132 (K1132) is an N6-acetyllysine. Residues 1321-1330 are compositionally biased toward basic and acidic residues; it reads GDTKLPRKPQ.

The protein belongs to the ubinuclein family.

The chain is Ubinuclein-2 (Ubn2) from Rattus norvegicus (Rat).